The following is a 355-amino-acid chain: Uroporphyrinogen decarboxylase (355 aa).

Residues 27–31 (RQAGR), aspartate 77, tyrosine 154, threonine 209, and histidine 327 each bind substrate.

The protein belongs to the uroporphyrinogen decarboxylase family. As to quaternary structure, homodimer.

Its subcellular location is the cytoplasm. It carries out the reaction uroporphyrinogen III + 4 H(+) = coproporphyrinogen III + 4 CO2. The protein operates within porphyrin-containing compound metabolism; protoporphyrin-IX biosynthesis; coproporphyrinogen-III from 5-aminolevulinate: step 4/4. In terms of biological role, catalyzes the decarboxylation of four acetate groups of uroporphyrinogen-III to yield coproporphyrinogen-III. This Yersinia pseudotuberculosis serotype O:1b (strain IP 31758) protein is Uroporphyrinogen decarboxylase.